The sequence spans 98 residues: NADH-ubiquinone oxidoreductase chain 4L (98 aa).

Transmembrane regions (helical) follow at residues 1 to 21 (MPPIYMNIILAFTLSLMGMLV), 29 to 49 (SLLCLEGMMLSLFILGTTMAL), and 61 to 81 (IVLLVFAACEAAVGLSLLVMV).

Belongs to the complex I subunit 4L family. In terms of assembly, core subunit of respiratory chain NADH dehydrogenase (Complex I) which is composed of 45 different subunits.

The protein resides in the mitochondrion inner membrane. It carries out the reaction a ubiquinone + NADH + 5 H(+)(in) = a ubiquinol + NAD(+) + 4 H(+)(out). Its function is as follows. Core subunit of the mitochondrial membrane respiratory chain NADH dehydrogenase (Complex I) which catalyzes electron transfer from NADH through the respiratory chain, using ubiquinone as an electron acceptor. Part of the enzyme membrane arm which is embedded in the lipid bilayer and involved in proton translocation. The sequence is that of NADH-ubiquinone oxidoreductase chain 4L (MT-ND4L) from Orycteropus afer (Aardvark).